Consider the following 247-residue polypeptide: tRNA (guanine-N(1)-)-methyltransferase (247 aa).

S-adenosyl-L-methionine contacts are provided by residues glycine 112 and 132 to 137; that span reads IGDFVL.

Belongs to the RNA methyltransferase TrmD family. In terms of assembly, homodimer.

The protein resides in the cytoplasm. It catalyses the reaction guanosine(37) in tRNA + S-adenosyl-L-methionine = N(1)-methylguanosine(37) in tRNA + S-adenosyl-L-homocysteine + H(+). Specifically methylates guanosine-37 in various tRNAs. The protein is tRNA (guanine-N(1)-)-methyltransferase of Geotalea uraniireducens (strain Rf4) (Geobacter uraniireducens).